The primary structure comprises 198 residues: MSKVLVLKSSILGGYSQSALLVDYLIGKWEKQGATITVRDLAGKDVLPMVDGEIASGLRGGAELTARQQEMLDLSNALVEELKANDTIVITAPMYNFNIPTQLKNWIDFVARAGVTFTYTENGPKGLVEGKRAVLITTRGGAHKDGPTDHMVPFLKTFLGFIGITDVDVVYAEALNMGPEANQKGISEAKASIDKLAV.

FMN is bound by residues Ser10, 16-18 (SQS), 94-97 (MYNF), and 138-141 (TRGG).

It belongs to the azoreductase type 1 family. Homodimer. The cofactor is FMN.

It carries out the reaction 2 a quinone + NADH + H(+) = 2 a 1,4-benzosemiquinone + NAD(+). The catalysed reaction is N,N-dimethyl-1,4-phenylenediamine + anthranilate + 2 NAD(+) = 2-(4-dimethylaminophenyl)diazenylbenzoate + 2 NADH + 2 H(+). Quinone reductase that provides resistance to thiol-specific stress caused by electrophilic quinones. Functionally, also exhibits azoreductase activity. Catalyzes the reductive cleavage of the azo bond in aromatic azo compounds to the corresponding amines. This is FMN-dependent NADH:quinone oxidoreductase from Shewanella oneidensis (strain ATCC 700550 / JCM 31522 / CIP 106686 / LMG 19005 / NCIMB 14063 / MR-1).